A 277-amino-acid polypeptide reads, in one-letter code: Large ribosomal subunit protein uL2 (277 aa).

The tract at residues 199-277 is disordered; that stretch reads DHMNTSVGKA…ILISRHKRKK (79 aa). Basic residues predominate over residues 209–220; that stretch reads GRTRWMGRRPHN.

The protein belongs to the universal ribosomal protein uL2 family. As to quaternary structure, part of the 50S ribosomal subunit. Forms a bridge to the 30S subunit in the 70S ribosome.

One of the primary rRNA binding proteins. Required for association of the 30S and 50S subunits to form the 70S ribosome, for tRNA binding and peptide bond formation. It has been suggested to have peptidyltransferase activity; this is somewhat controversial. Makes several contacts with the 16S rRNA in the 70S ribosome. The protein is Large ribosomal subunit protein uL2 of Nitrobacter winogradskyi (strain ATCC 25391 / DSM 10237 / CIP 104748 / NCIMB 11846 / Nb-255).